The chain runs to 625 residues: Arginine--tRNA ligase (625 aa).

Positions 128–138 match the 'HIGH' region motif; sequence VNPTKPLHMGH.

The protein belongs to the class-I aminoacyl-tRNA synthetase family.

The protein resides in the cytoplasm. It carries out the reaction tRNA(Arg) + L-arginine + ATP = L-arginyl-tRNA(Arg) + AMP + diphosphate. In Pyrococcus abyssi (strain GE5 / Orsay), this protein is Arginine--tRNA ligase (argS).